A 422-amino-acid chain; its full sequence is Keratin, type I cytoskeletal 23 (422 aa).

Polar residues predominate over residues methionine 1–alanine 13. Residues methionine 1–asparagine 71 are head. The segment at methionine 1–lysine 73 is disordered. Residues glycine 72–tryptophan 107 are coil 1A. Residues glycine 72 to threonine 382 form the IF rod domain. The segment at histidine 108–asparagine 125 is linker 1. Residues isoleucine 126–histidine 217 are coil 1B. The segment at histidine 218–valine 240 is linker 12. Residues leucine 241–glutamate 378 are coil 2. Residues serine 379–alanine 422 are rod-like helical tail.

The protein belongs to the intermediate filament family. Heterotetramer of two type I and two type II keratins.

The protein is Keratin, type I cytoskeletal 23 (KRT23) of Homo sapiens (Human).